A 237-amino-acid polypeptide reads, in one-letter code: Phosphoribosylaminoimidazole-succinocarboxamide synthase (237 aa).

This sequence belongs to the SAICAR synthetase family.

It carries out the reaction 5-amino-1-(5-phospho-D-ribosyl)imidazole-4-carboxylate + L-aspartate + ATP = (2S)-2-[5-amino-1-(5-phospho-beta-D-ribosyl)imidazole-4-carboxamido]succinate + ADP + phosphate + 2 H(+). It functions in the pathway purine metabolism; IMP biosynthesis via de novo pathway; 5-amino-1-(5-phospho-D-ribosyl)imidazole-4-carboxamide from 5-amino-1-(5-phospho-D-ribosyl)imidazole-4-carboxylate: step 1/2. The protein is Phosphoribosylaminoimidazole-succinocarboxamide synthase of Klebsiella pneumoniae (strain 342).